Consider the following 81-residue polypeptide: MYIFHGRVQGIGLRARTYSMAKSLGLSGYIKNRDDGTVEAVFQGDEEKIKRIIEYIKGIAYIEKIDYFDDDVKYNDFQIRY.

The 81-residue stretch at 1–81 (MYIFHGRVQG…VKYNDFQIRY (81 aa)) folds into the Acylphosphatase-like domain. Active-site residues include Arg14 and Asn32.

This sequence belongs to the acylphosphatase family.

It carries out the reaction an acyl phosphate + H2O = a carboxylate + phosphate + H(+). The sequence is that of Acylphosphatase (acyP) from Picrophilus torridus (strain ATCC 700027 / DSM 9790 / JCM 10055 / NBRC 100828 / KAW 2/3).